The primary structure comprises 279 residues: MSIPLLEYAPSSQNQRVEGYEVPNEDTPTIYRLAAAIDDADVDAIIWAGYRQIFSEHLIIKSNRQSFLESQLRNRAINVRDFIRGLGKSEVYRTQVADLNSNYRLVDITLKRFLGRAAYNQDEEIAWSIVIGSQGLHGFIDALLDSDEYRENFGDDIVPYQRRRYKDRPFNLVNPRYNAYWRDRQTLNALGGRSFYSARTSGTLTKDDIRRAIPANFMALAGKILTPERNYQRTIASVTSQIKDIKIPDTSREVTTPEVTVKPVAVALPYRYIPGNKTT.

One can recognise a PBS-linker domain in the interval 11–189 (SSQNQRVEGY…YWRDRQTLNA (179 aa)).

Belongs to the phycobilisome linker protein family. Part of the phycobilisome, a hemidiscoidal structure that is composed of two distinct substructures: a core complex and a number of rods radiating from the core.

It localises to the cellular thylakoid membrane. Its function is as follows. Rod-core linker protein required for attachment of phycocyanin to allophycocyanin in cores of phycobilisomes. Functionally, linker polypeptides determine the state of aggregation and the location of the disk-shaped phycobiliprotein units within the phycobilisome and modulate their spectroscopic properties in order to mediate a directed and optimal energy transfer. This chain is Phycobilisome rod-core linker polypeptide CpcG1, found in Nostoc sp. (strain PCC 7120 / SAG 25.82 / UTEX 2576).